Here is a 427-residue protein sequence, read N- to C-terminus: Enolase (427 aa).

(2R)-2-phosphoglycerate is bound at residue Gln163. Glu205 (proton donor) is an active-site residue. 3 residues coordinate Mg(2+): Asp242, Glu285, and Asp312. 4 residues coordinate (2R)-2-phosphoglycerate: Lys337, Arg366, Ser367, and Lys388. Lys337 functions as the Proton acceptor in the catalytic mechanism.

Belongs to the enolase family. Mg(2+) is required as a cofactor.

Its subcellular location is the cytoplasm. The protein resides in the secreted. It localises to the cell surface. The enzyme catalyses (2R)-2-phosphoglycerate = phosphoenolpyruvate + H2O. The protein operates within carbohydrate degradation; glycolysis; pyruvate from D-glyceraldehyde 3-phosphate: step 4/5. In terms of biological role, catalyzes the reversible conversion of 2-phosphoglycerate (2-PG) into phosphoenolpyruvate (PEP). It is essential for the degradation of carbohydrates via glycolysis. The chain is Enolase from Variovorax paradoxus (strain S110).